Consider the following 506-residue polypeptide: bZIP transcription factor TGA10 (506 aa).

Disordered stretches follow at residues valine 22 to histidine 50 and proline 113 to arginine 218. 4 stretches are compositionally biased toward polar residues: residues methionine 25–glycine 45, proline 113–glycine 124, proline 142–leucine 152, and serine 160–proline 180. A compositionally biased stretch (basic and acidic residues) spans aspartate 207–threonine 216. The 45-residue stretch at aspartate 213–arginine 257 folds into the bZIP domain. The tract at residues lysine 215–lysine 235 is basic motif. The Nuclear localization signal signature appears at leucine 217 to arginine 224. The tract at residues leucine 241–leucine 255 is leucine-zipper. Positions alanine 288–arginine 502 constitute a DOG1 domain.

Belongs to the bZIP family. As to quaternary structure, binds DNA as a dimer. Interacts with TGA2.2. As to expression, specifically expressed in roots.

The protein resides in the nucleus. Functionally, transcription activator that binds to as1-like elements (5'-TGACGTAAgggaTGACGCA-3') in promoters of target genes. Regulates transcription in response to plant signaling molecules salicylic acid (SA), methyl jasmonate (MJ) and auxin (2,4D) only in leaves. Prevents lateral branching and may repress defense signaling. The sequence is that of bZIP transcription factor TGA10 from Nicotiana tabacum (Common tobacco).